The sequence spans 234 residues: Inosine triphosphate pyrophosphatase (234 aa).

ITP is bound at residue 11–16 (SGNKGK). Glu-40 contacts Mg(2+). ITP contacts are provided by residues Lys-53, 81 to 82 (DT), Lys-98, 176 to 179 (FGWD), Lys-203, and 208 to 209 (HR).

This sequence belongs to the HAM1 NTPase family. As to quaternary structure, homodimer. Mg(2+) is required as a cofactor. The cofactor is Mn(2+).

The protein resides in the cytoplasm. It catalyses the reaction ITP + H2O = IMP + diphosphate + H(+). The enzyme catalyses dITP + H2O = dIMP + diphosphate + H(+). The catalysed reaction is XTP + H2O = XMP + diphosphate + H(+). Functionally, pyrophosphatase that hydrolyzes non-canonical purine nucleotides such as inosine triphosphate (ITP), deoxyinosine triphosphate (dITP) or xanthosine 5'-triphosphate (XTP) to their respective monophosphate derivatives. The enzyme does not distinguish between the deoxy- and ribose forms. Probably excludes non-canonical purines from RNA and DNA precursor pools, thus preventing their incorporation into RNA and DNA and avoiding chromosomal lesions. The polypeptide is Inosine triphosphate pyrophosphatase (Leishmania major).